Reading from the N-terminus, the 243-residue chain is Ribonuclease HII (243 aa).

The region spanning 23 to 217 (SVIVGVDEVG…LSSECEGAPP (195 aa)) is the RNase H type-2 domain. Positions 29, 30, and 122 each coordinate a divalent metal cation. The disordered stretch occupies residues 223 to 243 (LSSTGIKTPVDGRGDAVATRD). The segment covering 232–243 (VDGRGDAVATRD) has biased composition (basic and acidic residues).

The protein belongs to the RNase HII family. It depends on Mn(2+) as a cofactor. The cofactor is Mg(2+).

It localises to the cytoplasm. The catalysed reaction is Endonucleolytic cleavage to 5'-phosphomonoester.. Endonuclease that specifically degrades the RNA of RNA-DNA hybrids. The chain is Ribonuclease HII from Anaplasma marginale (strain St. Maries).